The chain runs to 407 residues: L-cysteine:1D-myo-inositol 2-amino-2-deoxy-alpha-D-glucopyranoside ligase (407 aa).

The tract at residues 1–22 is disordered; sequence MRSWSAPDIVPLPGTGGPLRVH. Cysteine 43 serves as a coordination point for Zn(2+). Residues 43–46, threonine 58, and 81–83 contribute to the L-cysteinyl-5'-AMP site; these read CGIT and NTT. The 'HIGH' region motif lies at 45–55; the sequence is ITPYDAAHLGH. The short motif at 183–188 is the 'ERGGDP' region element; it reads ERGGDP. Tryptophan 223 contacts L-cysteinyl-5'-AMP. Cysteine 227 serves as a coordination point for Zn(2+). Position 245-247 (245-247) interacts with L-cysteinyl-5'-AMP; the sequence is GSD. Histidine 252 contacts Zn(2+). Residue valine 278 participates in L-cysteinyl-5'-AMP binding. A 'KMSKS' region motif is present at residues 284 to 288; sequence KMSKS.

It belongs to the class-I aminoacyl-tRNA synthetase family. MshC subfamily. As to quaternary structure, monomer. Zn(2+) is required as a cofactor.

It carries out the reaction 1D-myo-inositol 2-amino-2-deoxy-alpha-D-glucopyranoside + L-cysteine + ATP = 1D-myo-inositol 2-(L-cysteinylamino)-2-deoxy-alpha-D-glucopyranoside + AMP + diphosphate + H(+). In terms of biological role, catalyzes the ATP-dependent condensation of GlcN-Ins and L-cysteine to form L-Cys-GlcN-Ins. The chain is L-cysteine:1D-myo-inositol 2-amino-2-deoxy-alpha-D-glucopyranoside ligase from Nocardiopsis dassonvillei (strain ATCC 23218 / DSM 43111 / CIP 107115 / JCM 7437 / KCTC 9190 / NBRC 14626 / NCTC 10488 / NRRL B-5397 / IMRU 509) (Actinomadura dassonvillei).